We begin with the raw amino-acid sequence, 244 residues long: tRNA pseudouridine synthase A (244 aa).

Residue D52 is the Nucleophile of the active site. Y110 serves as a coordination point for substrate.

The protein belongs to the tRNA pseudouridine synthase TruA family. Homodimer.

The enzyme catalyses uridine(38/39/40) in tRNA = pseudouridine(38/39/40) in tRNA. Functionally, formation of pseudouridine at positions 38, 39 and 40 in the anticodon stem and loop of transfer RNAs. In Pelobacter propionicus (strain DSM 2379 / NBRC 103807 / OttBd1), this protein is tRNA pseudouridine synthase A.